We begin with the raw amino-acid sequence, 161 residues long: Anthranilate 1,2-dioxygenase small subunit (161 aa).

The protein belongs to the bacterial ring-hydroxylating dioxygenase beta subunit family. In terms of assembly, part of a multicomponent enzyme system composed of a reductase (AndAa), a ferredoxin (AndAb) and a two-subunit oxygenase component (AndAc and AndAd).

The enzyme catalyses anthranilate + NADH + O2 + 3 H(+) = catechol + NH4(+) + CO2 + NAD(+). It catalyses the reaction anthranilate + NADPH + O2 + 3 H(+) = catechol + NH4(+) + CO2 + NADP(+). Its pathway is aromatic compound metabolism; anthranilate degradation via hydroxylation; catechol from anthranilate: step 1/1. Its function is as follows. Oxygenase component of anthranilate dioxygenase multicomponent enzyme system which catalyzes the incorporation of both atoms of molecular oxygen into anthranilate to form catechol. Can also act on benzoate and salicylate but not on 2-chlorobenzoate or o-toluate. In Burkholderia cepacia (Pseudomonas cepacia), this protein is Anthranilate 1,2-dioxygenase small subunit.